Consider the following 153-residue polypeptide: Vasotocin-neurophysin VT 1 (153 aa).

A signal peptide spans 1–20 (MPYSTFPLLWVLGLLALSSA). Cys21 and Cys26 are joined by a disulfide. Position 29 is a glycine amide (Gly29). 7 disulfides stabilise this stretch: Cys41–Cys85, Cys44–Cys58, Cys52–Cys75, Cys59–Cys65, Cys92–Cys104, Cys98–Cys116, and Cys105–Cys110.

Belongs to the vasopressin/oxytocin family. Seven disulfide bonds are present in neurophysin.

It is found in the secreted. Its function is as follows. Vasotocin is an antidiuretic hormone. The polypeptide is Vasotocin-neurophysin VT 1 (Oncorhynchus keta (Chum salmon)).